The primary structure comprises 650 residues: Vitrin (650 aa).

The signal sequence occupies residues 1-26 (MGIVVPTMKASVIEVLLVLLVTGIHS). Positions 40–133 (TVPQINCDVK…LSLPRWRESF (94 aa)) constitute an LCCL domain. Intrachain disulfides connect C46-C62 and C66-C86. The disordered stretch occupies residues 198–226 (RSTSKPFAASVTNSPRPQPVGHRSQEMEE). VWFA domains lie at 265 to 450 (DLSF…VKRV) and 467 to 640 (DIGF…IQNI). N-linked (GlcNAc...) asparagine glycosylation occurs at N492.

As to quaternary structure, binds dermatan sulfate and chondroitin sulfate.

The protein localises to the secreted. It is found in the extracellular space. It localises to the extracellular matrix. In terms of biological role, promotes matrix assembly and cell adhesiveness. Plays a role in spinal cord formation by regulating the proliferation and differentiation of neural stem cells. In Mus musculus (Mouse), this protein is Vitrin (Vit).